Here is a 381-residue protein sequence, read N- to C-terminus: Cytochrome b (381 aa).

4 consecutive transmembrane segments (helical) span residues 33 to 53, 77 to 98, 113 to 133, and 178 to 198; these read FGSL…FLAM, WLLR…FLHV, WNIG…GYVL, and FFAF…VHLL. Heme b contacts are provided by H83 and H97. 2 residues coordinate heme b: H182 and H196. H201 serves as a coordination point for a ubiquinone. 4 helical membrane-spanning segments follow: residues 226–246, 288–308, 320–340, and 347–367; these read IKDA…ALFS, LGGV…PLLH, ISQT…WIGG, and FIII…VLMP.

The protein belongs to the cytochrome b family. In terms of assembly, the cytochrome bc1 complex contains 11 subunits: 3 respiratory subunits (MT-CYB, CYC1 and UQCRFS1), 2 core proteins (UQCRC1 and UQCRC2) and 6 low-molecular weight proteins (UQCRH/QCR6, UQCRB/QCR7, UQCRQ/QCR8, UQCR10/QCR9, UQCR11/QCR10 and a cleavage product of UQCRFS1). This cytochrome bc1 complex then forms a dimer. The cofactor is heme b.

It localises to the mitochondrion inner membrane. Component of the ubiquinol-cytochrome c reductase complex (complex III or cytochrome b-c1 complex) that is part of the mitochondrial respiratory chain. The b-c1 complex mediates electron transfer from ubiquinol to cytochrome c. Contributes to the generation of a proton gradient across the mitochondrial membrane that is then used for ATP synthesis. In Pseudantechinus bilarni (Sandstone dibbler), this protein is Cytochrome b (MT-CYB).